The chain runs to 220 residues: Large ribosomal subunit protein uL3 (220 aa).

A disordered region spans residues 127-155 (FQGAIKRHGQSRGPMSHSSHFHRAPDSVG).

The protein belongs to the universal ribosomal protein uL3 family. Part of the 50S ribosomal subunit. Forms a cluster with proteins L14 and L19.

Its function is as follows. One of the primary rRNA binding proteins, it binds directly near the 3'-end of the 23S rRNA, where it nucleates assembly of the 50S subunit. The chain is Large ribosomal subunit protein uL3 from Staphylococcus aureus (strain JH9).